Here is an 866-residue protein sequence, read N- to C-terminus: MITTVIEKIFGTKSERDLKKLKPIIEKINSLESEILKLSDEELKQKTFYFKEQLAQGKTLDDILPESFAVVREAARRVIGLRHYDVQLLGGMVLHQGKIAEMRTGEGKTLVATLPSYLNALTGKGVHVVTVNDYLAKRDRNWMGPIHEFLGLSVGYINREMDNEGRQEMYKKDITYVTNNELGFDYLRDNMVVRKEDRVLKKLNYCIVDEVDSILIDEARTPLIISGPAEQSTDKYEVVNRIIPSLKIRKITEDDEIKAKYSGENLSAGYDAVIDEKNHNATLTEDGIAKAEKFLGVANLYNDVESEWVHHINQALRAHHLYEKDVDYVVKDGEVIIVDEFTGRLMPGRRWSDGLHQAVEAKERIKIKEENQTLATITFQNFFKLYSKLSGMTGTAMTEAGEFWQIYKLDVVEVPPNRPSKRVDGADLVYRTEREKYNAIVADIETLWKKGAPVLVGTRSIEKSEKVSAMLRSKGIPHKVLNAKYHEMEAQIISQAGAKGSVTIATNMAGRGTDIVLGGNPATPQQQAEVVELGGLHILGTERHESRRIDNQLRGRAARQGDPGSSRFYISLDDELMRLFANTSRISGILERMGMTEGQVIESRLMSRQIEGAQRMVEGHNFDIRKHLLDYDKVMNQQRTAIYHLRNKILDGESVSEQVMQMIEEVIHETFDKYYNVKHPQSTDFNTLNIFLQRAFTIDANFSGESIKGKSKEQIDGETFEAVKKAFEERSKYFNEQGVNFNEVERMLLLQIIDQAWKQHLYELDQMQKSVSLRGYAQKDPLIEYQKESYNLYQNMLNKVRDVMVEYIFRLQLPPKRRVSPIGTPSSEGGGETSGADTYSNKKIGRNDPCPCGSGKKYKKCCGADL.

Residues Q87, 105–109 (GEGKT), and D514 contribute to the ATP site. The interval 819-858 (VSPIGTPSSEGGGETSGADTYSNKKIGRNDPCPCGSGKKY) is disordered. The Zn(2+) site is built by C850, C852, C861, and C862.

Belongs to the SecA family. As to quaternary structure, monomer and homodimer. Part of the essential Sec protein translocation apparatus which comprises SecA, SecYEG and auxiliary proteins SecDF. Other proteins may also be involved. Zn(2+) serves as cofactor.

Its subcellular location is the cell inner membrane. It localises to the cytoplasm. The enzyme catalyses ATP + H2O + cellular proteinSide 1 = ADP + phosphate + cellular proteinSide 2.. Functionally, part of the Sec protein translocase complex. Interacts with the SecYEG preprotein conducting channel. Has a central role in coupling the hydrolysis of ATP to the transfer of proteins into and across the cell membrane, serving as an ATP-driven molecular motor driving the stepwise translocation of polypeptide chains across the membrane. The chain is Protein translocase subunit SecA from Elusimicrobium minutum (strain Pei191).